The following is a 561-amino-acid chain: Long-chain-fatty-acid--CoA ligase (561 aa).

213 to 224 (YTGGTTGVAKGA) is a binding site for ATP.

This sequence belongs to the ATP-dependent AMP-binding enzyme family. It depends on Mg(2+) as a cofactor.

It localises to the membrane. It catalyses the reaction a long-chain fatty acid + ATP + CoA = a long-chain fatty acyl-CoA + AMP + diphosphate. Its pathway is lipid metabolism; fatty acid beta-oxidation. In terms of biological role, catalyzes the esterification, concomitant with transport, of exogenous long-chain fatty acids into metabolically active CoA thioesters for subsequent degradation or incorporation into phospholipids. In Escherichia coli O6:H1 (strain CFT073 / ATCC 700928 / UPEC), this protein is Long-chain-fatty-acid--CoA ligase (fadD).